The sequence spans 356 residues: MADAAVIEKLEAGFKKLEAATDCKSLLKKYLTKEVFDKLKDKRTSLGATLLDVIQSGVENLDSGVGIYAPDAEAYTLFAPLFDPIIEDYHVGFKQTDKHPNKDFGDVNSFVNVDPEGKFVISTRVRCGRSLQGYPFNPCLTESQYKEMEAKVSSTLSSLEGELKGTYYPLTGMSKEVQQKLIDDHFLFKEGDRFLQAANACRYWPAGRGIYHNDNKTFLVWVNEEDHLRIISMQMGGDLGQVFRRLTSAVNEIEKRIPFSHHDRLGFLTFCPTNLGTTVRASVHIKLPKLAANREKLEEVAGKYNLQVRGTRGEHTEAEGGIYDISNKRRMGLTEFQAVKEMQDGILELIKIEKEM.

Residues 9 to 91 (KLEAGFKKLE…FDPIIEDYHV (83 aa)) form the Phosphagen kinase N-terminal domain. L-arginine is bound at residue 64–68 (GVGIY). The 238-residue stretch at 119–356 (FVISTRVRCG…LELIKIEKEM (238 aa)) folds into the Phosphagen kinase C-terminal domain. ATP-binding positions include 122-126 (STRVR) and His-185. Glu-225 serves as a coordination point for L-arginine. Arg-229 is a binding site for ATP. Cys-271 lines the L-arginine pocket. ATP is bound by residues 280–284 (RASVH) and 309–314 (RGTRGE). Glu-314 is a binding site for L-arginine.

This sequence belongs to the ATP:guanido phosphotransferase family. Monomer. Muscle (at protein level).

The enzyme catalyses L-arginine + ATP = N(omega)-phospho-L-arginine + ADP + H(+). It catalyses the reaction dTDP + ATP = dTTP + ADP. Catalyzes the reversible transfer of high energy ATP gamma-phosphate group to L-arginine. Has nucleoside diphosphate kinase-like activity toward dTDP. Binds and phosphorylates dTDP using ATP as a phosphate donor. Does not phosphorylate dADP, dCDP, dGDP, dTMP or thymidine. The protein is Arginine kinase Lit v 2.0101 of Penaeus vannamei (Whiteleg shrimp).